We begin with the raw amino-acid sequence, 143 residues long: Large ribosomal subunit protein uL11 (143 aa).

It belongs to the universal ribosomal protein uL11 family. Part of the ribosomal stalk of the 50S ribosomal subunit. Interacts with L10 and the large rRNA to form the base of the stalk. L10 forms an elongated spine to which L12 dimers bind in a sequential fashion forming a multimeric L10(L12)X complex. In terms of processing, one or more lysine residues are methylated.

Its function is as follows. Forms part of the ribosomal stalk which helps the ribosome interact with GTP-bound translation factors. The protein is Large ribosomal subunit protein uL11 of Nitrosospira multiformis (strain ATCC 25196 / NCIMB 11849 / C 71).